Reading from the N-terminus, the 999-residue chain is RING finger domain and kelch repeat-containing protein DDB_G0271372 (999 aa).

Residues 7–49 (CPNCLKVFNNPRQLECDHILCTRCIEGVYNPGRTPIIKCPVCD) form an RING-type zinc finger. Positions 92-143 (STGSSNNNNNNNNNNNNNNNNFVINNSNNKNNGATTTTTTTTTTTNSNSNST) are enriched in low complexity. 2 disordered regions span residues 92-147 (STGS…KSKV) and 159-209 (ASPK…SSPP). A compositionally biased stretch (polar residues) spans 165–196 (GSSQGSLTTINNQKKLTLSPQRASSTTTTSVN). The segment at 258–302 (AELSKCNDHDQKKFTIFCTDCDQLLCDECLNNNQQQHENHQLNKI) adopts a B box-type zinc-finger fold. Cys263, His266, Cys286, and His294 together coordinate Zn(2+). A coiled-coil region spans residues 355 to 402 (DIDTMIENLKERKNALISQIDKEYEEQKLELKDQIETINTTIVDIQNN). Low complexity-rich tracts occupy residues 485-516 (GVSS…IITT) and 526-536 (SPSPTSSSSST). Positions 485–637 (GVSSSPTGTG…TSTNGSNTKI (153 aa)) are disordered. Positions 552–612 (LSSQNYDNFG…SHGSKLNDNI (61 aa)) are enriched in polar residues. Residues 613–635 (NTNNNNSPSPTSSSTTSTNGSNT) show a composition bias toward low complexity. 5 Kelch repeats span residues 655-700 (ITAR…YDNN), 702-745 (TIYR…VFDG), 748-793 (YIYL…YHPT), 796-842 (CIYV…FDGS), and 844-892 (YINI…SMNL). The segment covering 904-924 (NSFSSISSHSSLNSSSSNNGI) has biased composition (low complexity). Positions 904–936 (NSFSSISSHSSLNSSSSNNGISGSGGSGGDNEI) are disordered.

This Dictyostelium discoideum (Social amoeba) protein is RING finger domain and kelch repeat-containing protein DDB_G0271372.